We begin with the raw amino-acid sequence, 123 residues long: MAKKRYRKVTEGIAHIKATFNNTMISVSDPQGNVLCFRSAGGSGFKGSRKGTPYGAQMASEEVGRLARDNFDMRRIAVRVKGPGAGRDSAIRGLRSAGLEVIHLEDRTPLPHNGCRPRKKRRV.

Belongs to the universal ribosomal protein uS11 family. In terms of assembly, part of the 30S ribosomal subunit. Interacts with proteins S7 and S18. Binds to IF-3.

Located on the platform of the 30S subunit, it bridges several disparate RNA helices of the 16S rRNA. Forms part of the Shine-Dalgarno cleft in the 70S ribosome. The protein is Small ribosomal subunit protein uS11 of Coxiella burnetii (strain CbuG_Q212) (Coxiella burnetii (strain Q212)).